The following is a 713-amino-acid chain: Phosphoribosylformylglycinamidine synthase subunit PurL (713 aa).

His32 is a catalytic residue. Position 35 (Tyr35) interacts with ATP. Residue Glu76 coordinates Mg(2+). Substrate-binding positions include 77-80 (SHNH) and Arg99. The Proton acceptor role is filled by His78. Asp100 provides a ligand contact to Mg(2+). Gln224 serves as a coordination point for substrate. Asp252 serves as a coordination point for Mg(2+). 296 to 298 (ESQ) is a substrate binding site. 2 residues coordinate ATP: Asp471 and Gly508. A Mg(2+)-binding site is contributed by Asn509. Position 511 (Ser511) interacts with substrate.

The protein belongs to the FGAMS family. In terms of assembly, monomer. Part of the FGAM synthase complex composed of 1 PurL, 1 PurQ and 2 PurS subunits.

The protein resides in the cytoplasm. It carries out the reaction N(2)-formyl-N(1)-(5-phospho-beta-D-ribosyl)glycinamide + L-glutamine + ATP + H2O = 2-formamido-N(1)-(5-O-phospho-beta-D-ribosyl)acetamidine + L-glutamate + ADP + phosphate + H(+). It participates in purine metabolism; IMP biosynthesis via de novo pathway; 5-amino-1-(5-phospho-D-ribosyl)imidazole from N(2)-formyl-N(1)-(5-phospho-D-ribosyl)glycinamide: step 1/2. Its function is as follows. Part of the phosphoribosylformylglycinamidine synthase complex involved in the purines biosynthetic pathway. Catalyzes the ATP-dependent conversion of formylglycinamide ribonucleotide (FGAR) and glutamine to yield formylglycinamidine ribonucleotide (FGAM) and glutamate. The FGAM synthase complex is composed of three subunits. PurQ produces an ammonia molecule by converting glutamine to glutamate. PurL transfers the ammonia molecule to FGAR to form FGAM in an ATP-dependent manner. PurS interacts with PurQ and PurL and is thought to assist in the transfer of the ammonia molecule from PurQ to PurL. This chain is Phosphoribosylformylglycinamidine synthase subunit PurL, found in Thermococcus kodakarensis (strain ATCC BAA-918 / JCM 12380 / KOD1) (Pyrococcus kodakaraensis (strain KOD1)).